A 556-amino-acid polypeptide reads, in one-letter code: Dihydroxy-acid dehydratase (556 aa).

Asp81 contributes to the Mg(2+) binding site. Cys122 provides a ligand contact to [2Fe-2S] cluster. The Mg(2+) site is built by Asp123 and Lys124. Lys124 is modified (N6-carboxylysine). Cys196 is a binding site for [2Fe-2S] cluster. Glu444 contacts Mg(2+). Ser470 (proton acceptor) is an active-site residue.

Belongs to the IlvD/Edd family. In terms of assembly, homodimer. The cofactor is [2Fe-2S] cluster. Mg(2+) serves as cofactor.

It carries out the reaction (2R)-2,3-dihydroxy-3-methylbutanoate = 3-methyl-2-oxobutanoate + H2O. The catalysed reaction is (2R,3R)-2,3-dihydroxy-3-methylpentanoate = (S)-3-methyl-2-oxopentanoate + H2O. The protein operates within amino-acid biosynthesis; L-isoleucine biosynthesis; L-isoleucine from 2-oxobutanoate: step 3/4. It participates in amino-acid biosynthesis; L-valine biosynthesis; L-valine from pyruvate: step 3/4. In terms of biological role, functions in the biosynthesis of branched-chain amino acids. Catalyzes the dehydration of (2R,3R)-2,3-dihydroxy-3-methylpentanoate (2,3-dihydroxy-3-methylvalerate) into 2-oxo-3-methylpentanoate (2-oxo-3-methylvalerate) and of (2R)-2,3-dihydroxy-3-methylbutanoate (2,3-dihydroxyisovalerate) into 2-oxo-3-methylbutanoate (2-oxoisovalerate), the penultimate precursor to L-isoleucine and L-valine, respectively. This is Dihydroxy-acid dehydratase from Syntrophotalea carbinolica (strain DSM 2380 / NBRC 103641 / GraBd1) (Pelobacter carbinolicus).